Consider the following 325-residue polypeptide: MAKKIAILTSGGDSPGMNNAIRTIVKTSKIHGIEVFLVYNGYKGLVEKTIKNANEINVDQYIGSGGTFIGSARYLEFKKLEVRQKAVQNLKEMGIDSLVVIGGDGSYAGAQLLHELGVKTIGLPGTIDNDIASTEYTIGLDTALNTIVENVDRLRDTMNSMNMVALVEVMGHGAGDLAMLSGLATGAEIIVTNAHRKSIDEMIEIVKDQMIAKTKRSVIGIVSEFIYDDLKKVAKEIEDKTGIRTRAIILAHTQRGGNPKAYERINASFLGIAAVESLLKNESGVALGFKGNKIISTPIPEALKAQNSAKNENELVTKINKINQS.

Gly12 is an ATP binding site. Residue 22–26 (RTIVK) coordinates ADP. ATP-binding positions include 73-74 (RY) and 103-106 (GDGS). Residue Asp104 participates in Mg(2+) binding. 126–128 (TID) lines the substrate pocket. The active-site Proton acceptor is Asp128. Arg155 is a binding site for ADP. Residue 170–172 (MGH) participates in substrate binding. ADP-binding positions include 186-188 (GAE), Lys213, and 215-217 (KRS). Substrate-binding positions include Glu224, Arg246, and 252–255 (HTQR).

It belongs to the phosphofructokinase type A (PFKA) family. ATP-dependent PFK group I subfamily. Prokaryotic clade 'B1' sub-subfamily. As to quaternary structure, homotetramer. Mg(2+) is required as a cofactor.

It localises to the cytoplasm. It carries out the reaction beta-D-fructose 6-phosphate + ATP = beta-D-fructose 1,6-bisphosphate + ADP + H(+). The protein operates within carbohydrate degradation; glycolysis; D-glyceraldehyde 3-phosphate and glycerone phosphate from D-glucose: step 3/4. Allosterically activated by ADP and other diphosphonucleosides, and allosterically inhibited by phosphoenolpyruvate. In terms of biological role, catalyzes the phosphorylation of D-fructose 6-phosphate to fructose 1,6-bisphosphate by ATP, the first committing step of glycolysis. The sequence is that of ATP-dependent 6-phosphofructokinase from Mycoplasma mobile (strain ATCC 43663 / 163K / NCTC 11711) (Mesomycoplasma mobile).